The sequence spans 488 residues: Bifunctional protein HldE (488 aa).

A ribokinase region spans residues 1–332; that stretch reads MRESFLDTIQ…QELQSQQSAA (332 aa). An ATP-binding site is contributed by 208 to 211; the sequence is NKRE. Residue D277 is part of the active site. A cytidylyltransferase region spans residues 359 to 488; it reads FTNGCFDLLH…TSNIIRKLAS (130 aa).

In the N-terminal section; belongs to the carbohydrate kinase PfkB family. It in the C-terminal section; belongs to the cytidylyltransferase family. As to quaternary structure, homodimer.

The catalysed reaction is D-glycero-beta-D-manno-heptose 7-phosphate + ATP = D-glycero-beta-D-manno-heptose 1,7-bisphosphate + ADP + H(+). It catalyses the reaction D-glycero-beta-D-manno-heptose 1-phosphate + ATP + H(+) = ADP-D-glycero-beta-D-manno-heptose + diphosphate. It functions in the pathway nucleotide-sugar biosynthesis; ADP-L-glycero-beta-D-manno-heptose biosynthesis; ADP-L-glycero-beta-D-manno-heptose from D-glycero-beta-D-manno-heptose 7-phosphate: step 1/4. It participates in nucleotide-sugar biosynthesis; ADP-L-glycero-beta-D-manno-heptose biosynthesis; ADP-L-glycero-beta-D-manno-heptose from D-glycero-beta-D-manno-heptose 7-phosphate: step 3/4. In terms of biological role, catalyzes the phosphorylation of D-glycero-D-manno-heptose 7-phosphate at the C-1 position to selectively form D-glycero-beta-D-manno-heptose-1,7-bisphosphate. Functionally, catalyzes the ADP transfer from ATP to D-glycero-beta-D-manno-heptose 1-phosphate, yielding ADP-D-glycero-beta-D-manno-heptose. The protein is Bifunctional protein HldE of Methylobacillus flagellatus (strain ATCC 51484 / DSM 6875 / VKM B-1610 / KT).